The following is an 822-amino-acid chain: Collagen alpha chain CG42342 (822 aa).

Disordered regions lie at residues 1–45 (MRKH…VEAP) and 66–99 (RLAPPPCQHPINNSNNNSNISNNSSNSSSSKERP). Over 1–104 (MRKHKAPPSG…SKERPRPTVR (104 aa)) the chain is Cytoplasmic. The segment covering 11–25 (SPRTMAQDNSQSEPS) has biased composition (polar residues). The segment covering 76-94 (INNSNNNSNISNNSSNSSS) has biased composition (low complexity). The chain crosses the membrane as a helical; Signal-anchor for type II membrane protein span at residues 105–125 (FISLLHVASYVLCLCAFSFAL). The Extracellular portion of the chain corresponds to 126–822 (YGNVRQTRLE…EYQDNLHNNE (697 aa)). Positions 131 to 162 (QTRLEQRMQRLQQLDARIVELELRLEQQQLLH) form a coiled coil. 3 disordered regions span residues 169 to 188 (QVLASHPSDRDSSNSNNGSQ), 205 to 297 (VSHL…GHPG), and 345 to 822 (LKGE…HNNE). The stretch at 194-222 (VRRELHRLRRDVSHLQLTRRQQRRQAAEA) forms a coiled coil. 7 Collagen-like domains span residues 241 to 299 (QPGP…PGMD), 350 to 409 (GEPG…KGDR), 430 to 469 (GPPGPAGPPGPPGEPGARGEPGPIGPAGPPGEKGPRGKRG), 493 to 526 (RGPPGPPGIAGKDGRDGRDGSKGEPGEPGEPGSL), 527 to 586 (GPRG…KGDK), 621 to 680 (GPPG…SGKA), and 681 to 740 (GIPG…KGEQ). The segment covering 242–251 (PGPPGPPGPP) has biased composition (pro residues). Basic and acidic residues predominate over residues 284 to 293 (PGDKGQKGDV). Residues 360-402 (EAGQPGAPGERGPPGEIGAQGPQGEAGQPGVAGPPGVAGAPGT) show a composition bias toward low complexity. A compositionally biased stretch (basic and acidic residues) spans 403-412 (KGDKGDRGDR). Residues 431-443 (PPGPAGPPGPPGE) show a composition bias toward pro residues. Residues 504–517 (KDGRDGRDGSKGEP) are compositionally biased toward basic and acidic residues. Residues 522 to 540 (EPGSLGPRGLDGLPGEPGI) show a composition bias toward low complexity. The span at 567–579 (LMGPPGLPGPPGY) shows a compositional bias: pro residues. Positions 583–602 (KGDKGDRGDSYRKMRRRQDD) are enriched in basic and acidic residues. Over residues 619 to 628 (PPGPPGPMGP) the composition is skewed to pro residues. Over residues 638-655 (RGLDGRKGDPGEKGHKGD) the composition is skewed to basic and acidic residues. The span at 658–668 (PMGLPGPMGMR) shows a compositional bias: low complexity. A coiled-coil region spans residues 790 to 822 (TSDYEQEEEEDDEQAEDNENEYDEYQDNLHNNE). The segment covering 793–815 (YEQEEEEDDEQAEDNENEYDEYQ) has biased composition (acidic residues).

Its subcellular location is the cell membrane. The polypeptide is Collagen alpha chain CG42342 (Drosophila melanogaster (Fruit fly)).